A 348-amino-acid polypeptide reads, in one-letter code: Dihydroorotase (348 aa).

Residues His-17 and His-19 each coordinate Zn(2+). Substrate contacts are provided by residues 19–21 (HLR) and Asn-45. Residues Lys-103, His-140, and His-178 each coordinate Zn(2+). Lys-103 is modified (N6-carboxylysine). His-140 lines the substrate pocket. Leu-223 serves as a coordination point for substrate. Asp-251 serves as a coordination point for Zn(2+). Asp-251 is a catalytic residue. Residues His-255 and Ala-267 each contribute to the substrate site.

Belongs to the metallo-dependent hydrolases superfamily. DHOase family. Class II DHOase subfamily. Homodimer. The cofactor is Zn(2+).

The catalysed reaction is (S)-dihydroorotate + H2O = N-carbamoyl-L-aspartate + H(+). Its pathway is pyrimidine metabolism; UMP biosynthesis via de novo pathway; (S)-dihydroorotate from bicarbonate: step 3/3. Functionally, catalyzes the reversible cyclization of carbamoyl aspartate to dihydroorotate. This chain is Dihydroorotase, found in Escherichia fergusonii (strain ATCC 35469 / DSM 13698 / CCUG 18766 / IAM 14443 / JCM 21226 / LMG 7866 / NBRC 102419 / NCTC 12128 / CDC 0568-73).